The following is a 252-amino-acid chain: AA9 family lytic polysaccharide monooxygenase B (252 aa).

Residues 1-20 form the signal peptide; the sequence is MVSFTKTFFAIVACALGVQA. The Cu(2+) site is built by histidine 21 and histidine 106. A disulfide bridge connects residues cysteine 72 and cysteine 198. Asparagine 158 carries N-linked (GlcNAc...) asparagine glycosylation. O2 contacts are provided by histidine 184 and glutamine 193. Position 195 (tyrosine 195) interacts with Cu(2+). Asparagine 237 carries an N-linked (GlcNAc...) asparagine glycan.

The protein belongs to the polysaccharide monooxygenase AA9 family. Cu(2+) is required as a cofactor.

The protein resides in the secreted. The catalysed reaction is [(1-&gt;4)-beta-D-glucosyl]n+m + reduced acceptor + O2 = 4-dehydro-beta-D-glucosyl-[(1-&gt;4)-beta-D-glucosyl]n-1 + [(1-&gt;4)-beta-D-glucosyl]m + acceptor + H2O.. In terms of biological role, lytic polysaccharide monooxygenase (LPMO) that depolymerizes crystalline and amorphous polysaccharides via the oxidation of scissile alpha- or beta-(1-4)-glycosidic bonds, yielding C1 or C4 oxidation products. Catalysis by LPMOs requires the reduction of the active-site copper from Cu(II) to Cu(I) by a reducing agent and H(2)O(2) or O(2) as a cosubstrate. The synergistic activity of LPMO9B with xylanase Xyl10G or cellulase Cel5B shows efficient bioconversion rates of 56 and 174 percent in pretreated kenaf (Hibiscus cannabinus) and oak, respectively. The sequence is that of AA9 family lytic polysaccharide monooxygenase B from Gloeophyllum trabeum (strain ATCC 11539 / FP-39264 / Madison 617) (Brown rot fungus).